Reading from the N-terminus, the 506-residue chain is Maturase K (506 aa).

The protein belongs to the intron maturase 2 family. MatK subfamily.

Its subcellular location is the plastid. It is found in the chloroplast. In terms of biological role, usually encoded in the trnK tRNA gene intron. Probably assists in splicing its own and other chloroplast group II introns. In Carica papaya (Papaya), this protein is Maturase K.